A 196-amino-acid chain; its full sequence is Spore maturation protein A (196 aa).

The next 4 helical transmembrane spans lie at 1 to 21 (MVNI…MCNG), 37 to 57 (AITI…LMKI), 133 to 153 (ITFL…VIAV), and 163 to 183 (TDIV…AIII).

The protein localises to the cell membrane. In terms of biological role, involved in spore core dehydration; might be involved in the transport of something into or out of the forespore or could be required for some modification of the cortex peptidoglycan structure. This is Spore maturation protein A (spmA) from Bacillus subtilis (strain 168).